A 93-amino-acid polypeptide reads, in one-letter code: UPF0358 protein RBAM_014700 (93 aa).

This sequence belongs to the UPF0358 family.

This is UPF0358 protein RBAM_014700 from Bacillus velezensis (strain DSM 23117 / BGSC 10A6 / LMG 26770 / FZB42) (Bacillus amyloliquefaciens subsp. plantarum).